Here is a 469-residue protein sequence, read N- to C-terminus: Glutamate--tRNA ligase 1 (469 aa).

The short motif at 10–20 is the 'HIGH' region element; the sequence is PSPTGYLHIGG. The Zn(2+) site is built by cysteine 99, cysteine 101, cysteine 126, and aspartate 128. The 'KMSKS' region motif lies at 237 to 241; the sequence is RLSKR. Lysine 240 contributes to the ATP binding site.

The protein belongs to the class-I aminoacyl-tRNA synthetase family. Glutamate--tRNA ligase type 1 subfamily. Monomer. The cofactor is Zn(2+).

It localises to the cytoplasm. It catalyses the reaction tRNA(Glu) + L-glutamate + ATP = L-glutamyl-tRNA(Glu) + AMP + diphosphate. Catalyzes the attachment of glutamate to tRNA(Glu) in a two-step reaction: glutamate is first activated by ATP to form Glu-AMP and then transferred to the acceptor end of tRNA(Glu). In Coxiella burnetii (strain RSA 331 / Henzerling II), this protein is Glutamate--tRNA ligase 1.